Consider the following 334-residue polypeptide: Protein-methionine-sulfoxide reductase catalytic subunit MsrP (334 aa).

Residues 1-44 constitute a signal peptide (tat-type signal); the sequence is MKKNQFLKESDVTAESVFFMKRRQVLKALGISAAALSLPHAAHA. Mo-molybdopterin contacts are provided by residues N88, 91–92, C146, T181, N233, R238, and 249–251; these read YE and GIK.

This sequence belongs to the MsrP family. As to quaternary structure, heterodimer of a catalytic subunit (MsrP) and a heme-binding subunit (MsrQ). Mo-molybdopterin serves as cofactor. In terms of processing, predicted to be exported by the Tat system. The position of the signal peptide cleavage has not been experimentally proven.

It localises to the periplasm. It carries out the reaction L-methionyl-[protein] + a quinone + H2O = L-methionyl-(S)-S-oxide-[protein] + a quinol. The catalysed reaction is L-methionyl-[protein] + a quinone + H2O = L-methionyl-(R)-S-oxide-[protein] + a quinol. In terms of biological role, part of the MsrPQ system that repairs oxidized periplasmic proteins containing methionine sulfoxide residues (Met-O), using respiratory chain electrons. Thus protects these proteins from oxidative-stress damage caused by reactive species of oxygen and chlorine generated by the host defense mechanisms. MsrPQ is essential for the maintenance of envelope integrity under bleach stress, rescuing a wide series of structurally unrelated periplasmic proteins from methionine oxidation, including the primary periplasmic chaperone SurA and the lipoprotein Pal. The catalytic subunit MsrP is non-stereospecific, being able to reduce both (R-) and (S-) diastereoisomers of methionine sulfoxide. This Escherichia coli (strain UTI89 / UPEC) protein is Protein-methionine-sulfoxide reductase catalytic subunit MsrP.